The primary structure comprises 364 residues: Matrix protein (364 aa).

The short motif at 23–26 (FPIV) is the FPIV motif element.

The protein belongs to the morbillivirus/respirovirus/rubulavirus M protein family.

It localises to the virion. Its function is as follows. The M protein has a crucial role in virus assembly and interacts with the RNP complex as well as with the viral membrane. In Gallus gallus (Chicken), this protein is Matrix protein (M).